A 1035-amino-acid polypeptide reads, in one-letter code: Sialidase A (1035 aa).

An N-terminal signal peptide occupies residues 1–53 (MSYFRNRDIDIERNSMNRSVQERKCRYSIRKLSVGAVSMIVGAVVFGTSPVLA). Residues 57-112 (ASEQPLANETQLSGESSTLTDTEKSQPSSETELSGNKQEQERKDKQEEKIPRDYYA) form a disordered region. Positions 61–92 (PLANETQLSGESSTLTDTEKSQPSSETELSGN) are enriched in polar residues. Positions 94 to 112 (QEQERKDKQEEKIPRDYYA) are enriched in basic and acidic residues. R347 lines the substrate pocket. D372 functions as the Proton acceptor in the catalytic mechanism. 3 BNR repeats span residues 381 to 392 (RRSEDNGKTWGD), 539 to 550 (SYSDDDGKTWSA), and 607 to 618 (IYSDDHGKTWHA). E647 is an active-site residue. R663 contributes to the substrate binding site. The BNR 4 repeat unit spans residues 672-683 (ATSKDGGVTWEK). The segment at 902–951 (GPLGTSGEEPAPTVEKPEYTGPLGTSGEEPAPTVEKPEYTGPLGTAGEEA) is disordered. The short motif at 1003–1007 (LPETG) is the LPXTG sorting signal element. T1006 carries the post-translational modification Pentaglycyl murein peptidoglycan amidated threonine. Positions 1007–1035 (GNKESDLLASLGLTAFFLGLFTLGKKREQ) are cleaved as a propeptide — removed by sortase.

It belongs to the glycosyl hydrolase 33 family.

The protein localises to the secreted. It is found in the cell wall. It catalyses the reaction Hydrolysis of alpha-(2-&gt;3)-, alpha-(2-&gt;6)-, alpha-(2-&gt;8)- glycosidic linkages of terminal sialic acid residues in oligosaccharides, glycoproteins, glycolipids, colominic acid and synthetic substrates.. In Streptococcus pneumoniae, this protein is Sialidase A (nanA).